The chain runs to 783 residues: Tricorn protease-interacting factor F2 (783 aa).

Residues Glu107 and 236–240 (GAMEN) contribute to the substrate site. A Zn(2+)-binding site is contributed by His271. Glu272 serves as the catalytic Proton acceptor. Residues His275 and Glu294 each contribute to the Zn(2+) site.

This sequence belongs to the peptidase M1 family. Monomer. Part of the Tricorn proteolytic complex. It depends on Zn(2+) as a cofactor.

The protein localises to the cytoplasm. Functionally, proteases F1, F2 and F3 degrade oligopeptides produced by Tricorn (themselves probably produced by the proteasome), yielding free amino acids. The sequence is that of Tricorn protease-interacting factor F2 (trf2) from Thermoplasma acidophilum (strain ATCC 25905 / DSM 1728 / JCM 9062 / NBRC 15155 / AMRC-C165).